The following is a 143-amino-acid chain: Actin-depolymerizing factor 5 (143 aa).

The region spanning 11-143 is the ADF-H domain; that stretch reads GMRVTDECTS…GFDIIQDRAK (133 aa).

This sequence belongs to the actin-binding proteins ADF family. Expressed exclusively in root tip meristem.

The protein resides in the cytoplasm. It is found in the cytoskeleton. In terms of biological role, actin-depolymerizing protein. Severs actin filaments (F-actin) and binds to actin monomers. This Arabidopsis thaliana (Mouse-ear cress) protein is Actin-depolymerizing factor 5 (ADF5).